A 487-amino-acid polypeptide reads, in one-letter code: 2-aminomuconic semialdehyde dehydrogenase (487 aa).

231–236 (GSQPTA) lines the NAD(+) pocket. The Proton acceptor role is filled by Glu-253. The Nucleophile role is filled by Cys-287.

Belongs to the aldehyde dehydrogenase family.

Its subcellular location is the cytoplasm. The catalysed reaction is 2-aminomuconate 6-semialdehyde + NAD(+) + H2O = (2Z,4E)-2-aminomuconate + NADH + 2 H(+). It functions in the pathway amino-acid degradation; L-kynurenine degradation. Functionally, catalyzes the NAD-dependent oxidation of 2-aminomuconic semialdehyde of the kynurenine metabolic pathway in L-tryptophan degradation. The polypeptide is 2-aminomuconic semialdehyde dehydrogenase (ALDH8A1) (Bos taurus (Bovine)).